A 203-amino-acid polypeptide reads, in one-letter code: Holliday junction branch migration complex subunit RuvA (203 aa).

Positions methionine 1–asparagine 64 are domain I. The segment at asparagine 65 to proline 142 is domain II. The segment at alanine 143–proline 154 is flexible linker. The tract at residues alanine 155–leucine 203 is domain III.

Belongs to the RuvA family. As to quaternary structure, homotetramer. Forms an RuvA(8)-RuvB(12)-Holliday junction (HJ) complex. HJ DNA is sandwiched between 2 RuvA tetramers; dsDNA enters through RuvA and exits via RuvB. An RuvB hexamer assembles on each DNA strand where it exits the tetramer. Each RuvB hexamer is contacted by two RuvA subunits (via domain III) on 2 adjacent RuvB subunits; this complex drives branch migration. In the full resolvosome a probable DNA-RuvA(4)-RuvB(12)-RuvC(2) complex forms which resolves the HJ.

Its subcellular location is the cytoplasm. In terms of biological role, the RuvA-RuvB-RuvC complex processes Holliday junction (HJ) DNA during genetic recombination and DNA repair, while the RuvA-RuvB complex plays an important role in the rescue of blocked DNA replication forks via replication fork reversal (RFR). RuvA specifically binds to HJ cruciform DNA, conferring on it an open structure. The RuvB hexamer acts as an ATP-dependent pump, pulling dsDNA into and through the RuvAB complex. HJ branch migration allows RuvC to scan DNA until it finds its consensus sequence, where it cleaves and resolves the cruciform DNA. The chain is Holliday junction branch migration complex subunit RuvA from Shigella boydii serotype 18 (strain CDC 3083-94 / BS512).